We begin with the raw amino-acid sequence, 125 residues long: UPF0102 protein Mpop_0474 (125 aa).

Belongs to the UPF0102 family.

This chain is UPF0102 protein Mpop_0474, found in Methylorubrum populi (strain ATCC BAA-705 / NCIMB 13946 / BJ001) (Methylobacterium populi).